The chain runs to 1410 residues: MDIYDTQTLGVVVFGGFMVVSAIGIFLVSTFSMKETSYEEALANQRKEMAKTHHQKVEKKKKEKTVEKKGKTKKKEEKPNGKIPDHDPAPNVTVLLREPVRAPAVAVAPTPVQPPIIVAPVATVPAMPQEKLASSPKDKKKKEKKVAKVEPAVSSVVNSIQVLTSKAAILETAPKEVPMVVVPPVGAKGNTPATGTTQGKKAEGTQNQSKKAEGAPNQGRKAEGTPNQGKKTEGTPNQGKKAEGTPNQGKKAEGTPNQGKKAEGAQNQGKKVDTTPNQGKKVEGAPTQGRKAEGAQNQAKKVEGAQNQGKKAEGAQNQGKKGEGAQNQGKKAEGAQNQGKKAEGAQNQGKKAEGAQNQGKKAEGAQNQGKKAEGAQNQGKKAEGAQNQGKKVEGAQNQGKKAEGAQNQGKKAEGAQNQGKKAEGAQNQGKKAEGAQNQGKKAEGAQNQGKKAEGAQNQGKKAEGAQNQGKKVEGAQNQGKKAEGAQNQGKKAEGAQNQGKKAEGAQNQGQKGEGAQNQGKKTEGAQGKKAERSPNQGKKGEGAPIQGKKADSVANQGTKVEGITNQGKKAEGSPSEGKKAEGSPNQGKKADAAANQGKKTESASVQGRNTDVAQSPEAPKQEAPAKKKSGSKKKGEPGPPDADGPLYLPYKTLVSTVGSMVFNEGEAQRLIEILSEKAGIIQDTWHKATQKGDPVAILKRQLEEKEKLLATEQEDAAVAKSKLRELNKEMAAEKAKAAAGEAKVKKQLVAREQEITAVQARMQASYREHVKEVQQLQGKIRTLQEQLENGPNTQLARLQQENSILRDALNQATSQVESKQNAELAKLRQELSKVSKELVEKSEAVRQDEQQRKALEAKAAAFEKQVLQLQASHRESEEALQKRLDEVSRELCHTQSSHASLRADAEKAQEQQQQMAELHSKLQSSEAEVRSKCEELSGLHGQLQEARAENSQLTERIRSIEALLEAGQARDAQDVQASQAEADQQQTRLKELESQVSGLEKEAIELREAVEQQKVKNNDLREKNWKAMEALATAEQACKEKLLSLTQAKEESEKQLCLIEAQTMEALLALLPELSVLAQQNYTEWLQDLKEKGPTLLKHPPAPAEPSSDLASKLREAEETQSTLQAECDQYRSILAETEGMLRDLQKSVEEEEQVWRAKVGAAEEELQKSRVTVKHLEEIVEKLKGELESSDQVREHTSHLEAELEKHMAAASAECQNYAKEVAGLRQLLLESQSQLDAAKSEAQKQSDELALVRQQLSEMKSHVEDGDIAGAPASSPEAPPAEQDPVQLKTQLEWTEAILEDEQTQRQKLTAEFEEAQTSACRLQEELEKLRTAGPLESSETEEASQLKERLEKEKKLTSDLGRAATRLQELLKTTQEQLAREKDTVKKLQEQLEKAEDGSSSKEGTSV.

Residues 1–7 (MDIYDTQ) are Lumenal-facing. The chain crosses the membrane as a helical span at residues 8–28 (TLGVVVFGGFMVVSAIGIFLV). The Cytoplasmic segment spans residues 29 to 1410 (STFSMKETSY…GSSSKEGTSV (1382 aa)). Disordered stretches follow at residues 44–90 (NQRK…DPAP) and 129–152 (QEKL…VEPA). A compositionally biased stretch (basic residues) spans 52–63 (THHQKVEKKKKE). Positions 64–88 (KTVEKKGKTKKKEEKPNGKIPDHDP) are enriched in basic and acidic residues. Residue K148 forms a Glycyl lysine isopeptide (Lys-Gly) (interchain with G-Cter in SUMO2) linkage. Residues S159 and S165 each carry the phosphoserine modification. 2 disordered regions span residues 173–648 (APKE…PLYL) and 895–925 (QSSH…LQSS). 2 stretches are compositionally biased toward polar residues: residues 191–209 (TPAT…QNQS) and 225–238 (TPNQ…TPNQ). Tandem repeats lie at residues 197-206 (TQGKKAEGTQ), 207-216 (NQSKKAEGAP), 217-226 (NQGRKAEGTP), 227-236 (NQGKKTEGTP), 237-246 (NQGKKAEGTP), 247-256 (NQGKKAEGTP), 257-266 (NQGKKAEGAQ), 267-276 (NQGKKVDTTP), 277-286 (NQGKKVEGAP), 287-296 (TQGRKAEGAQ), 297-306 (NQAKKVEGAQ), 307-316 (NQGKKAEGAQ), 317-326 (NQGKKGEGAQ), 327-336 (NQGKKAEGAQ), 337-346 (NQGKKAEGAQ), 347-356 (NQGKKAEGAQ), 357-366 (NQGKKAEGAQ), 367-376 (NQGKKAEGAQ), 377-386 (NQGKKAEGAQ), 387-396 (NQGKKVEGAQ), 397-406 (NQGKKAEGAQ), 407-416 (NQGKKAEGAQ), 417-426 (NQGKKAEGAQ), 427-436 (NQGKKAEGAQ), 437-446 (NQGKKAEGAQ), 447-456 (NQGKKAEGAQ), 457-466 (NQGKKAEGAQ), 467-476 (NQGKKVEGAQ), 477-486 (NQGKKAEGAQ), 487-496 (NQGKKAEGAQ), 497-506 (NQGKKAEGAQ), 507-516 (NQGQKGEGAQ), and 517-526 (NQGKKTEGAQ). Residues 197–604 (TQGKKAEGTQ…NQGKKTESAS (408 aa)) are 41 X 10 AA approximate tandem repeats of [TN]-Q-[GSA]-[KRQT]-K-[ATGSV]-[ED]-[GTAS]-[ATIS]-[PQTAS]. T225, T235, T245, and T255 each carry phosphothreonine. Composition is skewed to polar residues over residues 265-278 (AQNQ…TPNQ) and 295-519 (AQNQ…QNQG). Over residues 520 to 532 (KKTEGAQGKKAER) the composition is skewed to basic and acidic residues. The 34; approximate repeat unit spans residues 527-534 (GKKAERSP). S533 carries the phosphoserine modification. Copy 35 of the repeat occupies 535–544 (NQGKKGEGAP). The 36; approximate repeat unit spans residues 545–554 (IQGKKADSVA). Residues 553-567 (VANQGTKVEGITNQG) are compositionally biased toward polar residues. 2 tandem repeats follow at residues 555-564 (NQGTKVEGIT) and 565-574 (NQGKKAEGSP). A compositionally biased stretch (basic and acidic residues) spans 568-581 (KKAEGSPSEGKKAE). Residues S573 and S583 each carry the phosphoserine modification. A 39; approximate repeat occupies 575 to 584 (SEGKKAEGSP). 2 repeat units span residues 585–594 (NQGKKADAAA) and 595–604 (NQGKKTESAS). The span at 602–612 (SASVQGRNTDV) shows a compositional bias: polar residues. S615 carries the post-translational modification Phosphoserine. Residue K620 forms a Glycyl lysine isopeptide (Lys-Gly) (interchain with G-Cter in SUMO1) linkage. Phosphoserine is present on S900. The residue at position 932 (K932) is an N6-acetyllysine. Phosphoserine is present on residues S959 and S978. Disordered stretches follow at residues 1093 to 1122 (GPTL…ETQS), 1260 to 1287 (EMKS…EQDP), 1330 to 1362 (EKLR…LTSD), and 1378 to 1410 (QEQL…GTSV). Phosphoserine occurs at positions 1276 and 1277. Composition is skewed to basic and acidic residues over residues 1347-1360 (SQLK…KKLT) and 1381-1403 (LARE…DGSS).

The protein resides in the endoplasmic reticulum membrane. Its function is as follows. Acts as a ribosome receptor and mediates interaction between the ribosome and the endoplasmic reticulum membrane. The polypeptide is Ribosome-binding protein 1 (RRBP1) (Homo sapiens (Human)).